The primary structure comprises 274 residues: Large ribosomal subunit protein uL2 (274 aa).

The segment at 221-274 (RGTAMNPVDHPHGGGEGKNFGKHPVTPWGVQTKGKKTRSNKRTDKFIVRRRSKK) is disordered.

This sequence belongs to the universal ribosomal protein uL2 family. As to quaternary structure, part of the 50S ribosomal subunit. Forms a bridge to the 30S subunit in the 70S ribosome.

In terms of biological role, one of the primary rRNA binding proteins. Required for association of the 30S and 50S subunits to form the 70S ribosome, for tRNA binding and peptide bond formation. It has been suggested to have peptidyltransferase activity; this is somewhat controversial. Makes several contacts with the 16S rRNA in the 70S ribosome. In Serratia proteamaculans (strain 568), this protein is Large ribosomal subunit protein uL2.